The following is a 290-amino-acid chain: Arylamine N-acetyltransferase 1 (290 aa).

An N-acetylmethionine modification is found at methionine 1. The active-site Acyl-thioester intermediate is the cysteine 68. Serine 103 serves as a coordination point for CoA. 106 to 107 (VH) serves as a coordination point for substrate. Active-site residues include histidine 107 and aspartate 122. Tyrosine 208 lines the CoA pocket.

It belongs to the arylamine N-acetyltransferase family.

It localises to the cytoplasm. The enzyme catalyses an arylamine + acetyl-CoA = an N-acetylarylamine + CoA. Its function is as follows. Participates in the detoxification of a plethora of hydrazine and arylamine drugs. Isoniazid, 2-aminofluorene and anisidine are preferred substrates for NAT-1. No activity with p-aminobenzoic acid (PABA) nor SMZ. The chain is Arylamine N-acetyltransferase 1 (Nat1) from Mus musculus (Mouse).